Reading from the N-terminus, the 380-residue chain is Acyl-lipid (9+3)-(E)-desaturase (380 aa).

A disordered region spans residues 1–25 (MGAGGCISVSETKPNQKNSLERAPY). Polar residues predominate over residues 9 to 18 (VSETKPNQKN). The next 2 membrane-spanning stretches (helical) occupy residues 52-72 (LSYVASDLTVAFLLYHATTYF) and 81-101 (ALAWLAYWVAQGCVLTGVWVI). Residues 103–107 (HECGH) carry the Histidine box-1 motif. Positions 139–143 (HRRHH) match the Histidine box-2 motif. 3 helical membrane-spanning segments follow: residues 177–197 (IGVLFITLTLGWPLYLTFNVS), 223–243 (IYLSDIGIVITSLVLLRAAMV), and 247–267 (VWLICVYGVPLMITNGFLVLV). A Histidine box-3 motif is present at residues 313-317 (HIVHH).

Belongs to the fatty acid desaturase type 1 family.

The protein localises to the membrane. The catalysed reaction is a (9Z)-octadecenoyl-containing glycerolipid + 2 Fe(II)-[cytochrome b5] + O2 + 2 H(+) = a (9Z,12E)-octadecadienoyl-containing glycerolipid + 2 Fe(III)-[cytochrome b5] + 2 H2O. It carries out the reaction a (9Z)-hexadecenoyl-containing glycerolipid + 2 Fe(II)-[cytochrome b5] + O2 + 2 H(+) = a (9Z,12E)-hexadecadienoyl-containing glycerolipid + 2 Fe(III)-[cytochrome b5] + 2 H2O. In terms of biological role, involved in the biosynthesis of dimorphecolic acid (9-OH-18:2(10E,12E)). Converts oleic acid (18:1(9Z)) into 18:2(9Z,12E) and probably palmitoleic acid (16:1(9Z)) into 16:2(9Z,12E). Very limited ability to catalyze (Z)-delta(12) desaturation. This Dimorphotheca sinuata (African daisy) protein is Acyl-lipid (9+3)-(E)-desaturase.